A 464-amino-acid polypeptide reads, in one-letter code: Cyclin-dependent kinase 8 (464 aa).

Positions 1–15 are interaction with CCNC; it reads MGYDFKVKLTGERER. A Protein kinase domain is found at 21–335; it reads EYEGCKVGRG…SEQAMQDPYF (315 aa). Residues 27–35 and lysine 52 contribute to the ATP site; that span reads VGRGTYGHV. Residue aspartate 151 is the Proton acceptor of the active site. The interval 360–464 is disordered; it reads TEEEPEDKAD…PQYSHQTHRY (105 aa). The span at 373 to 390 shows a compositional bias: low complexity; the sequence is QQQQQGNNHTNGAGHTGN. Polar residues-rich tracts occupy residues 410–426 and 434–446; these read TATS…QRSN and PGPS…SSMG. Residues 447–464 show a composition bias toward low complexity; that stretch reads YSSTSQQPPQYSHQTHRY.

The protein belongs to the protein kinase superfamily. CMGC Ser/Thr protein kinase family. CDC2/CDKX subfamily. Component of the Mediator complex. Interacts with ccnc. Requires Mg(2+) as cofactor.

Its subcellular location is the nucleus. The catalysed reaction is L-seryl-[protein] + ATP = O-phospho-L-seryl-[protein] + ADP + H(+). It carries out the reaction L-threonyl-[protein] + ATP = O-phospho-L-threonyl-[protein] + ADP + H(+). It catalyses the reaction [DNA-directed RNA polymerase] + ATP = phospho-[DNA-directed RNA polymerase] + ADP + H(+). In terms of biological role, component of the Mediator complex, a coactivator involved in regulated gene transcription of nearly all RNA polymerase II-dependent genes. Mediator functions as a bridge to convey information from gene-specific regulatory proteins to the basal RNA polymerase II transcription machinery. Mediator is recruited to promoters by direct interactions with regulatory proteins and serves as a scaffold for the assembly of a functional pre-initiation complex with RNA polymerase II and the general transcription factors. Phosphorylates the CTD (C-terminal domain) of the large subunit of RNA polymerase II (RNAp II), which may inhibit the formation of a transcription initiation complex. This is Cyclin-dependent kinase 8 (cdk8) from Danio rerio (Zebrafish).